Reading from the N-terminus, the 202-residue chain is Holliday junction branch migration complex subunit RuvA (202 aa).

The segment at 1–64 (MIGRLSGTLL…EDAHLLFGFA (64 aa)) is domain I. Positions 65–143 (GRAERELFRQ…SLPSADLLSP (79 aa)) are domain II. The tract at residues 144–152 (APAAGAALL) is flexible linker. Residues 153 to 202 (VENDERADISQALQALGYSAREAEAALKSVPDGTDVATGIRLALKALARP) form a domain III region.

It belongs to the RuvA family. In terms of assembly, homotetramer. Forms an RuvA(8)-RuvB(12)-Holliday junction (HJ) complex. HJ DNA is sandwiched between 2 RuvA tetramers; dsDNA enters through RuvA and exits via RuvB. An RuvB hexamer assembles on each DNA strand where it exits the tetramer. Each RuvB hexamer is contacted by two RuvA subunits (via domain III) on 2 adjacent RuvB subunits; this complex drives branch migration. In the full resolvosome a probable DNA-RuvA(4)-RuvB(12)-RuvC(2) complex forms which resolves the HJ.

It is found in the cytoplasm. Its function is as follows. The RuvA-RuvB-RuvC complex processes Holliday junction (HJ) DNA during genetic recombination and DNA repair, while the RuvA-RuvB complex plays an important role in the rescue of blocked DNA replication forks via replication fork reversal (RFR). RuvA specifically binds to HJ cruciform DNA, conferring on it an open structure. The RuvB hexamer acts as an ATP-dependent pump, pulling dsDNA into and through the RuvAB complex. HJ branch migration allows RuvC to scan DNA until it finds its consensus sequence, where it cleaves and resolves the cruciform DNA. This chain is Holliday junction branch migration complex subunit RuvA, found in Laribacter hongkongensis (strain HLHK9).